The chain runs to 415 residues: Magnesium-chelatase subunit ChlI, chloroplastic (415 aa).

Residues 1–67 constitute a chloroplast transit peptide; that stretch reads MASAFSPATA…APSATQQEAK (67 aa). Cystine bridges form between Cys93–Cys184 and Cys345–Cys387.

The protein belongs to the Mg-chelatase subunits D/I family. In terms of assembly, the magnesium chelatase complex is a heterotrimer consisting of subunits CHLI, CHLD and CHLH.

It localises to the plastid. The protein resides in the chloroplast. The enzyme catalyses protoporphyrin IX + Mg(2+) + ATP + H2O = Mg-protoporphyrin IX + ADP + phosphate + 3 H(+). It participates in porphyrin-containing compound metabolism; chlorophyll biosynthesis. Its activity is regulated as follows. Redox regulation; active in reducing conditions, inactive in oxidizing conditions. Thioredoxins f and m mediate the reversible reductive activation of oxidized CHLI. Functionally, involved in chlorophyll biosynthesis. Catalyzes the insertion of magnesium ion into protoporphyrin IX to yield Mg-protoporphyrin IX. The reaction takes place in two steps, with an ATP-dependent activation followed by an ATP-dependent chelation step. The protein is Magnesium-chelatase subunit ChlI, chloroplastic (CHLI) of Oryza sativa subsp. japonica (Rice).